A 292-amino-acid polypeptide reads, in one-letter code: MQDLIKRTLPQDDALNQAIVNDLRSQNWAGFLNYSQVQQLCHNFELTTLKLAMHLLPLAASYSHTAISHFNVGAIAIGEQGDFYFGANQEFANSAIQQTIHAEQSAISHAWLRNERRISDMVVNYTPCGHCRQFMNELHGAEKISIHLPHSQNNPLHSYLPDAFGPKDLDIAAHLLAEENHDLVADHQDDLVNQAILAANQSHCPYSNSPHGIAILFKNSDVVTGRYAENAAFNPSLPALQTALNFAYLNDKKLSDIERIVMAEKALKLSHKTMAETLLSTLTSVELEYYSL.

2 CMP/dCMP-type deaminase domains span residues 47–167 (TTLK…FGPK) and 186–292 (DHQD…YYSL). A substrate-binding site is contributed by 88–90 (NQE). Histidine 101 is a binding site for Zn(2+). Glutamate 103 serves as the catalytic Proton donor. The Zn(2+) site is built by cysteine 128 and cysteine 131.

Belongs to the cytidine and deoxycytidylate deaminase family. As to quaternary structure, homodimer. Requires Zn(2+) as cofactor.

It carries out the reaction cytidine + H2O + H(+) = uridine + NH4(+). The catalysed reaction is 2'-deoxycytidine + H2O + H(+) = 2'-deoxyuridine + NH4(+). This enzyme scavenges exogenous and endogenous cytidine and 2'-deoxycytidine for UMP synthesis. The protein is Cytidine deaminase of Haemophilus influenzae (strain ATCC 51907 / DSM 11121 / KW20 / Rd).